The chain runs to 149 residues: UPF0251 protein Moth_1655 (149 aa).

The tract at residues Ala-129–His-149 is disordered.

This sequence belongs to the UPF0251 family.

The sequence is that of UPF0251 protein Moth_1655 from Moorella thermoacetica (strain ATCC 39073 / JCM 9320).